A 489-amino-acid chain; its full sequence is Bifunctional protein HldE (489 aa).

The tract at residues 1-328 is ribokinase; sequence METENIHSFD…ELKAQLQDQP (328 aa). 206–209 is a binding site for ATP; that stretch reads NKKE. D276 is an active-site residue. The interval 357 to 489 is cytidylyltransferase; the sequence is LTNGCFDLLH…IIQDIRNGRG (133 aa).

In the N-terminal section; belongs to the carbohydrate kinase PfkB family. It in the C-terminal section; belongs to the cytidylyltransferase family. In terms of assembly, homodimer.

The catalysed reaction is D-glycero-beta-D-manno-heptose 7-phosphate + ATP = D-glycero-beta-D-manno-heptose 1,7-bisphosphate + ADP + H(+). It carries out the reaction D-glycero-beta-D-manno-heptose 1-phosphate + ATP + H(+) = ADP-D-glycero-beta-D-manno-heptose + diphosphate. The protein operates within nucleotide-sugar biosynthesis; ADP-L-glycero-beta-D-manno-heptose biosynthesis; ADP-L-glycero-beta-D-manno-heptose from D-glycero-beta-D-manno-heptose 7-phosphate: step 1/4. It participates in nucleotide-sugar biosynthesis; ADP-L-glycero-beta-D-manno-heptose biosynthesis; ADP-L-glycero-beta-D-manno-heptose from D-glycero-beta-D-manno-heptose 7-phosphate: step 3/4. Catalyzes the phosphorylation of D-glycero-D-manno-heptose 7-phosphate at the C-1 position to selectively form D-glycero-beta-D-manno-heptose-1,7-bisphosphate. Its function is as follows. Catalyzes the ADP transfer from ATP to D-glycero-beta-D-manno-heptose 1-phosphate, yielding ADP-D-glycero-beta-D-manno-heptose. This Desulfatibacillum aliphaticivorans protein is Bifunctional protein HldE.